Reading from the N-terminus, the 380-residue chain is Protein COS12 (380 aa).

Topologically, residues 1–70 are cytoplasmic; sequence MDGAKFENTV…WKIRGKRHYL (70 aa). The chain crosses the membrane as a helical span at residues 71–91; the sequence is VIVTALMFEVLYFLWTYSYIF. The Extracellular portion of the chain corresponds to 92–231; it reads RERTLGKQVS…KLLWAFKEVT (140 aa). The chain crosses the membrane as a helical span at residues 232 to 252; the sequence is IMNSRFAFFSIAYLNGLLTIP. The Cytoplasmic segment spans residues 253 to 257; sequence RLRNS. A helical transmembrane segment spans residues 258 to 278; sequence LHILYVCAVLSSMIIEYLIGI. Over 279–380 the chain is Extracellular; that stretch reads DKFRFKSMNL…KEAQSACNDV (102 aa).

Belongs to the DUP/COS family.

The protein localises to the membrane. This chain is Protein COS12 (COS12), found in Saccharomyces cerevisiae (strain ATCC 204508 / S288c) (Baker's yeast).